Here is a 205-residue protein sequence, read N- to C-terminus: Endothelial cell-specific chemotaxis regulator (205 aa).

Residues 1–24 (MGTAGAMQLCWVILGFLLFRGHNS) form the signal peptide. Topologically, residues 25–124 (QPTMTQTSSS…TSETVLTVAA (100 aa)) are extracellular. Composition is skewed to polar residues over residues 49 to 71 (SSNP…STGT) and 86 to 101 (SRDT…TTMS). Residues 49 to 101 (SSNPGYIPSSEANRPSHLSSTGTPGAGVPSSGRDGGTSRDTFQTVPPNSTTMS) are disordered. A helical transmembrane segment spans residues 125–145 (FGVISFIVILVVVVIILVGVV). Over 146–205 (SLRFKCRKSKESEDPQKPGSSGLSESCSTANGEKDSITLISMKNINMNNGKQSLSAEKVL) the chain is Cytoplasmic. Residues 153–175 (KSKESEDPQKPGSSGLSESCSTA) form a disordered region. Polar residues predominate over residues 163-175 (PGSSGLSESCSTA). The residue at position 198 (Ser198) is a Phosphoserine.

It belongs to the ECSCR family. Interacts with FLNA. Interacts with the 20S proteasome subunit PSMA7. In terms of processing, may be heavily O-glycosylated. Highest expression in endothelial cells. Also detected in vascular smooth muscle, macrophages, lymphocytes, and mast cells.

Its subcellular location is the cell membrane. It is found in the cytoplasm. In terms of biological role, regulates endothelial chemotaxis and tube formation. Has a role in angiogenesis and apoptosis via modulation of the actin cytoskeleton and facilitation of proteasomal degradation of the apoptosis inhibitors BIRC3/IAP1 and BIRC2/IAP2. The polypeptide is Endothelial cell-specific chemotaxis regulator (ECSCR) (Homo sapiens (Human)).